The primary structure comprises 1149 residues: Beta-alanine-activating enzyme (1149 aa).

ATP contacts are provided by residues 178–186 (TSGTTGLPK), aspartate 408, arginine 422, and lysine 543. Residues 570 to 646 (ASVRLKLQNL…DLLSHIMTET (77 aa)) enclose the Carrier domain. An O-(pantetheine 4'-phosphoryl)serine modification is found at serine 605. The disordered stretch occupies residues 653–683 (PSKKRTADYSDSEASGKRQHKEMTTSSDTES).

This sequence belongs to the ATP-dependent AMP-binding enzyme family.

Its function is as follows. Covalently binds beta-alanine in an ATP-dependent manner to form a thioester bond with its phosphopantetheine group and transfers it to an, as yet, unknown acceptor. May be required for a post-translational protein modification or for post-transcriptional modification of an RNA. The polypeptide is Beta-alanine-activating enzyme (aasdh) (Danio rerio (Zebrafish)).